Here is a 383-residue protein sequence, read N- to C-terminus: MLIVADENIPLLDAFFAGFGEIRRYPGRAIDAASAKDADVLLVRSVTRVDRQLLEGSKVRFVGTCTIGTDHLDLDYFADAGIHWSSAPGCNARGVVDYVLGSLLTLAELEGVDLNRRVYGVVGAGEVGGRLVRVLHGLGWKVLVCDPVREASEGGEFVSLETILAQCDVISLHTPLQRGGEHPTWHLLDQEKLASLRPGAWLINASRGPVVDNVALRELLLDREDVHAVLDVWEGEPQVDLQLADLCTLATPHIAGYSLDGKQRGTAQIYQAFCRWRGEPEQVRLADLLPAHSLARIELDANADPAWALATLCRAVYDPRRDDADFRRSLSDDVAEQRAAFDLLRKHYPVRREIEGLAVGLRGEAPQLAQMVSALGAELVGVA.

2 residues coordinate substrate: Ser45 and Thr66. NAD(+) is bound by residues Asp146, Thr174, Ala205 to Arg207, and Asp231. The active site involves Arg207. Glu236 is an active-site residue. His253 serves as the catalytic Proton donor. Gly256 is an NAD(+) binding site. Position 257 (Tyr257) interacts with substrate.

It belongs to the D-isomer specific 2-hydroxyacid dehydrogenase family. PdxB subfamily. As to quaternary structure, homodimer.

Its subcellular location is the cytoplasm. The catalysed reaction is 4-phospho-D-erythronate + NAD(+) = (R)-3-hydroxy-2-oxo-4-phosphooxybutanoate + NADH + H(+). The protein operates within cofactor biosynthesis; pyridoxine 5'-phosphate biosynthesis; pyridoxine 5'-phosphate from D-erythrose 4-phosphate: step 2/5. Functionally, catalyzes the oxidation of erythronate-4-phosphate to 3-hydroxy-2-oxo-4-phosphonooxybutanoate. The protein is Erythronate-4-phosphate dehydrogenase of Pseudomonas entomophila (strain L48).